Here is a 146-residue protein sequence, read N- to C-terminus: Hemoglobin subunit beta (146 aa).

Val1 carries the N-acetylvaline modification. The Globin domain occupies 2–146; that stretch reads HLTGEEKSAV…VANALAHKYH (145 aa). Thr12 carries the phosphothreonine modification. Phosphoserine is present on Ser44. An N6-acetyllysine modification is found at Lys59. His63 is a heme b binding site. Lys82 carries the N6-acetyllysine modification. Heme b is bound at residue His92. Cys93 carries the S-nitrosocysteine modification. An N6-acetyllysine modification is found at Lys144.

This sequence belongs to the globin family. In terms of assembly, heterotetramer of two alpha chains and two beta chains. In terms of tissue distribution, red blood cells.

Functionally, involved in oxygen transport from the lung to the various peripheral tissues. The sequence is that of Hemoglobin subunit beta (HBB) from Leontocebus fuscicollis (Brown-mantled tamarin).